A 341-amino-acid chain; its full sequence is tRNA N6-adenosine threonylcarbamoyltransferase (341 aa).

The Fe cation site is built by His-110 and His-114. Substrate-binding positions include 133 to 137 (LVSGG), Asp-166, Gly-179, and Asn-276. Residue Asp-304 participates in Fe cation binding.

Belongs to the KAE1 / TsaD family. It depends on Fe(2+) as a cofactor.

The protein localises to the cytoplasm. The enzyme catalyses L-threonylcarbamoyladenylate + adenosine(37) in tRNA = N(6)-L-threonylcarbamoyladenosine(37) in tRNA + AMP + H(+). Its function is as follows. Required for the formation of a threonylcarbamoyl group on adenosine at position 37 (t(6)A37) in tRNAs that read codons beginning with adenine. Is involved in the transfer of the threonylcarbamoyl moiety of threonylcarbamoyl-AMP (TC-AMP) to the N6 group of A37, together with TsaE and TsaB. TsaD likely plays a direct catalytic role in this reaction. The protein is tRNA N6-adenosine threonylcarbamoyltransferase of Saccharophagus degradans (strain 2-40 / ATCC 43961 / DSM 17024).